Here is a 757-residue protein sequence, read N- to C-terminus: MEGPEIKFAEAVLDNGKYGTRTVRFEAGRLAQQAQGAVAAYLDEDTMLLSATSVGKHPKDNFDFFPLTIDVEERSYAAGKIPGSFFRREGRPSTEAILVCRLIDRPLRPSFITGLRNEVQVVITVLSIAPDEFYDSLAINAASASSMLSGIPFSGPIAGVRLALIGDQWVVFPKHSQLKEAVFDITVAGRVVTDAQGNEDVAIMMVEAEATEGAWDLIQAGATKPDEAVVAQGLEAAKPFIRQLVAAQASLAQQAAKPTVDYPVFLPYAQQSYDAVSALALEELGTVYRIADKIERQDADDALKTRTKEAVAAKVEAGELPQSALTEFSAAYKSVTKTVVRGRILRDGIRMDGRGLADIRPLDAEVQVIPRVHGSAIFQRGETQILGVTTLNMLKMEQQIDSLSPVTKKRFMTHYNFPPYSTGETGRVGSPKRREIGHGFLAERALVPVLPSREDFPYAIRQVSEALGSNGSTSMGSVCASTLSLLNAGVPLRAPVAGIAMGLVSDTVDGQVRYAALTDILGAEDALGDMDFKVAGTSEFVTAIQLDTKLDGIPTSVLDGALKQAKEARTAILGVLNQAIDAPDEMAPTAPRVISVNIPVDKIGELIGPKGKTINAIQDETGADISIEEDGAVYIGAVDGPSAEAARAQVNAIANPTNPEVGESFLGTVVKIATFGAFVSLLPGKDGLLHISEVRKLAGGKRVENVEDVLGVGQKILVEITKIDDRGKLSLAPVMEEAADQEGSAAASDGPEAPAEG.

2 residues coordinate Mg(2+): Asp-525 and Asp-531. The KH domain occupies 591 to 650 (PRVISVNIPVDKIGELIGPKGKTINAIQDETGADISIEEDGAVYIGAVDGPSAEAARAQV). The region spanning 662–734 (GESFLGTVVK…DRGKLSLAPV (73 aa)) is the S1 motif domain. The segment at 736 to 757 (EEAADQEGSAAASDGPEAPAEG) is disordered.

The protein belongs to the polyribonucleotide nucleotidyltransferase family. Mg(2+) serves as cofactor.

The protein resides in the cytoplasm. The enzyme catalyses RNA(n+1) + phosphate = RNA(n) + a ribonucleoside 5'-diphosphate. Its function is as follows. Involved in mRNA degradation. Catalyzes the phosphorolysis of single-stranded polyribonucleotides processively in the 3'- to 5'-direction. The sequence is that of Polyribonucleotide nucleotidyltransferase from Clavibacter sepedonicus (Clavibacter michiganensis subsp. sepedonicus).